Here is a 519-residue protein sequence, read N- to C-terminus: Trichothecene 15-O-acetyltransferase TRI3 (519 aa).

Histidine 414 serves as a coordination point for 15-deacetylcalonectrin.

It belongs to the trichothecene O-acetyltransferase family.

It participates in sesquiterpene biosynthesis; trichothecene biosynthesis. Functionally, 15-O-acetyltransferase; part of the core gene cluster that mediates the biosynthesis of trichothecenes, a very large family of chemically related bicyclic sesquiterpene compounds acting as mycotoxins, including T2-toxin. The biosynthesis of trichothecenes begins with the cyclization of farnesyl diphosphate to trichodiene and is catalyzed by the trichodiene synthase TRI5. Trichodiene undergoes a series of oxygenations catalyzed by the cytochrome P450 monooxygenase TRI4. TRI4 controls the addition of four oxygens at C-2, C-3, C-11, and the C-12, C-13-epoxide to form the intermediate isotrichotriol. Isotrichotriol then undergoes a non-enzymatic isomerization and cyclization to form isotrichodermol. During this process, the oxygen at the C-2 position becomes the pyran ring oxygen and the hydroxyl group at C-11 is lost. More complex type A trichothecenes are built by modifying isotrichodermol through a series of paired hydroxylation and acetylation or acylation steps. Isotrichodermol is converted to isotrichodermin by the acetyltransferase TRI101. TRI101 encodes a C-3 transacetylase that acts as a self-protection or resistance factor during biosynthesis and that the presence of a free C-3 hydroxyl group is a key component of Fusarium trichothecene phytotoxicity. A second hydroxyl group is added to C-15 by the trichothecene C-15 hydroxylase TRI11, producing 15-decalonectrin, which is then acetylated by TRI3, producing calonectrin. A third hydroxyl group is added at C-4 by the cytochrome P450 monooxygenase TRI13, converting calonectrin to 3,15-diacetoxyspirpenol, which is subsequently acetylated by the acetyltransferase TRI7. A fourth hydroxyl group is added to C-8 by the cytochrome P450 monooxygenase TRI1, followed by the addition of an isovaleryl moiety by TRI16. Finally, the acetyl group is removed from the C-3 position by the trichothecene C-3 esterase TRI8 to produce T-2 toxin. In Fusarium sporotrichioides, this protein is Trichothecene 15-O-acetyltransferase TRI3.